The chain runs to 211 residues: Transcription antitermination protein NusB (211 aa).

The disordered stretch occupies residues 152-211; sequence PAKKERVANPFPSTPPKKPENVPNPFSTPFKKNSSEPIRNPFEGNKSPQPPQKTLRRKKK. Residues 175–188 show a composition bias toward polar residues; that stretch reads NPFSTPFKKNSSEP.

Belongs to the NusB family.

In terms of biological role, involved in transcription antitermination. Required for transcription of ribosomal RNA (rRNA) genes. Binds specifically to the boxA antiterminator sequence of the ribosomal RNA (rrn) operons. The protein is Transcription antitermination protein NusB of Chloroherpeton thalassium (strain ATCC 35110 / GB-78).